Consider the following 583-residue polypeptide: Putative rhophilin-2-like protein RHPN2P1 (583 aa).

The region spanning 26–375 (PLIPLGLKET…RLTYAQHQED (350 aa)) is the BRO1 domain. Residues 412–490 (RSNRFTAEEG…DEIEMKVVSL (79 aa)) enclose the PDZ domain.

This chain is Putative rhophilin-2-like protein RHPN2P1 (RHPN2P1), found in Homo sapiens (Human).